The sequence spans 125 residues: MVKEFSRSDRVAEQIQRELADLLQFEVKDPRVSSMVTVTEVEVSGDMSHAKVYYTAPQGTPELQKGLEKTAGFLRSQLARRLLLRTVPQLHFVYDASIDRGMRIAKLIDEALPPVADPDQDSEPN.

Belongs to the RbfA family. As to quaternary structure, monomer. Binds 30S ribosomal subunits, but not 50S ribosomal subunits or 70S ribosomes.

The protein localises to the cytoplasm. Its function is as follows. One of several proteins that assist in the late maturation steps of the functional core of the 30S ribosomal subunit. Associates with free 30S ribosomal subunits (but not with 30S subunits that are part of 70S ribosomes or polysomes). Required for efficient processing of 16S rRNA. May interact with the 5'-terminal helix region of 16S rRNA. The sequence is that of Ribosome-binding factor A from Methylobacillus flagellatus (strain ATCC 51484 / DSM 6875 / VKM B-1610 / KT).